Reading from the N-terminus, the 408-residue chain is LIN1-like protein (408 aa).

Residues M1–S161 are disordered. The segment covering Y41–Q52 has biased composition (acidic residues). Basic and acidic residues-rich tracts occupy residues I53–Q62, D73–L109, and N119–D129. The 59-residue stretch at S344–D402 folds into the GYF domain.

The protein belongs to the LIN1 family.

The chain is LIN1-like protein from Schizosaccharomyces pombe (strain 972 / ATCC 24843) (Fission yeast).